The chain runs to 950 residues: Protocadherin alpha-8 (950 aa).

Residues 1–29 form the signal peptide; that stretch reads MVYHWRGDLGSWRLLLLLLLLAAWKVGSG. Cadherin domains are found at residues 30–133, 157–242, 243–350, 351–455, 456–565, and 581–678; these read QLHY…PPVF, ASDA…APNF, EQSE…VPEI, ALTS…APAF, AQPE…APAL, and VPRS…APKA. The Extracellular portion of the chain corresponds to 30 to 697; it reads QLHYSVPEEA…GPEAALVDVN (668 aa). N-linked (GlcNAc...) asparagine glycans are attached at residues Asn-257 and Asn-265. An N-linked (GlcNAc...) asparagine glycan is attached at Asn-548. Residues 698–718 traverse the membrane as a helical segment; it reads VYLIIAICAVSSLLVLTLLLY. At 719 to 950 the chain is on the cytoplasmic side; that stretch reads TALRCSALPT…GNSTTDNSDQ (232 aa). PXXP repeat units follow at residues 774 to 777, 799 to 802, 832 to 835, 873 to 876, and 891 to 894; these read PCLP, PRQP, PGGP, PGNP, and PGSP. The interval 774 to 894 is 5 X 4 AA repeats of P-X-X-P; the sequence is PCLPPDLGSV…PDKFIIPGSP (121 aa). Residues 831–950 form a disordered region; the sequence is GPGGPDQQWP…GNSTTDNSDQ (120 aa). Residues 909–923 show a composition bias toward basic and acidic residues; it reads DKSDFITFGKKEETK.

It localises to the cell membrane. In terms of biological role, potential calcium-dependent cell-adhesion protein. May be involved in the establishment and maintenance of specific neuronal connections in the brain. This chain is Protocadherin alpha-8 (PCDHA8), found in Pan troglodytes (Chimpanzee).